The primary structure comprises 363 residues: MLKQTPLFDLHRDMGGKLVDFGGWNMPVNYGSQIEEHHAVRNGAGMFDVSHMTVVDIQGTGARDFLRYLLANDVDRLKLPGKALYTGMLNESGGVIDDLIVYLMVNGYRLVVNCATREKDLAWINSQAEAYDVTVIERPELAMIAVQGPLARGKVHDLIGAAVLEELKIFQGVPLSGEGYADWFVARTGYTGEDGYEIILPAEAAVQLWQDLARIGVTPCGLGARDTLRLEAGMNLYGHEMDDDTSPLVANMAWTVAWEPAERNFIGREALTAEKSAGISHKLVGLVYTGKGVLRAEQEVTAPGVDGVGVITSGTFSPTLGYSIALARVPVGFTDQAVVNVRNRQLEVKIISPCFVRSGNKVF.

This sequence belongs to the GcvT family. In terms of assembly, the glycine cleavage system is composed of four proteins: P, T, L and H.

The catalysed reaction is N(6)-[(R)-S(8)-aminomethyldihydrolipoyl]-L-lysyl-[protein] + (6S)-5,6,7,8-tetrahydrofolate = N(6)-[(R)-dihydrolipoyl]-L-lysyl-[protein] + (6R)-5,10-methylene-5,6,7,8-tetrahydrofolate + NH4(+). Its function is as follows. The glycine cleavage system catalyzes the degradation of glycine. In Teredinibacter turnerae (strain ATCC 39867 / T7901), this protein is Aminomethyltransferase.